The chain runs to 298 residues: Aspartate carbamoyltransferase catalytic subunit (298 aa).

Residues R54 and T55 each coordinate carbamoyl phosphate. Position 82 (K82) interacts with L-aspartate. Carbamoyl phosphate contacts are provided by R104, H132, and Q135. L-aspartate is bound by residues R165 and R218. Residues G260 and P261 each contribute to the carbamoyl phosphate site.

It belongs to the aspartate/ornithine carbamoyltransferase superfamily. ATCase family. In terms of assembly, heterododecamer (2C3:3R2) of six catalytic PyrB chains organized as two trimers (C3), and six regulatory PyrI chains organized as three dimers (R2).

It carries out the reaction carbamoyl phosphate + L-aspartate = N-carbamoyl-L-aspartate + phosphate + H(+). The protein operates within pyrimidine metabolism; UMP biosynthesis via de novo pathway; (S)-dihydroorotate from bicarbonate: step 2/3. Functionally, catalyzes the condensation of carbamoyl phosphate and aspartate to form carbamoyl aspartate and inorganic phosphate, the committed step in the de novo pyrimidine nucleotide biosynthesis pathway. The sequence is that of Aspartate carbamoyltransferase catalytic subunit from Wolbachia sp. subsp. Brugia malayi (strain TRS).